Consider the following 120-residue polypeptide: Large ribosomal subunit protein uL18 (120 aa).

This sequence belongs to the universal ribosomal protein uL18 family. In terms of assembly, part of the 50S ribosomal subunit; part of the 5S rRNA/L5/L18/L25 subcomplex. Contacts the 5S and 23S rRNAs.

This is one of the proteins that bind and probably mediate the attachment of the 5S RNA into the large ribosomal subunit, where it forms part of the central protuberance. In Paramagnetospirillum magneticum (strain ATCC 700264 / AMB-1) (Magnetospirillum magneticum), this protein is Large ribosomal subunit protein uL18.